A 281-amino-acid chain; its full sequence is Ornithine lipid ester-linked acyl 2-hydroxylase (281 aa).

Residues 1 to 24 (MTESPLSAPAPTSNQSPAPEQTFG) show a composition bias toward polar residues. The segment at 1–29 (MTESPLSAPAPTSNQSPAPEQTFGTAGIA) is disordered.

Belongs to the aspartyl/asparaginyl beta-hydroxylase family.

The catalysed reaction is an N(2)-[(3R)-3-(2-saturated-acyloxy)acyl]-L-ornithine lipid + 2-oxoglutarate + O2 = a 2-hydroxyornithine lipid + succinate + CO2. The protein operates within lipid metabolism. Its function is as follows. Involved in the biosynthesis of ornithine lipids (OLs), which are phosphorus-free membrane lipids. Catalyzes the hydroxylation at the 2 position of the secondary fatty acid of OL. Contributes to symbiotic performance and acid tolerance. The chain is Ornithine lipid ester-linked acyl 2-hydroxylase from Rhizobium tropici.